A 201-amino-acid polypeptide reads, in one-letter code: Regulator of G-protein signaling 16 (201 aa).

Residues cysteine 2 and cysteine 12 are each lipidated (S-palmitoyl cysteine). The RGS domain maps to 64–180 (SFDLLLNSKN…LKSPAYRDLA (117 aa)). The residue at position 167 (tyrosine 167) is a Phosphotyrosine; by EGFR. Tyrosine 176 carries the phosphotyrosine modification. Positions 181–201 (AQASATSTSAPSGSPAEPSHT) are disordered.

Interacts with GNAI1 and GNAQ. Interacts with GNAI3, GNAI3 and GNAO1. Palmitoylated on Cys-2 and/or Cys-12. In terms of processing, phosphorylated. Phosphorylation at Tyr-167 by EGFR enhances GTPase accelerating (GAP) activity toward GNAI1. In terms of tissue distribution, retinal; also predominantly expressed in the liver and pituitary.

It is found in the membrane. Its function is as follows. Regulates G protein-coupled receptor signaling cascades. Inhibits signal transduction by increasing the GTPase activity of G protein alpha subunits, thereby driving them into their inactive GDP-bound form. Plays an important role in the phototransduction cascade by regulating the lifetime and effective concentration of activated transducin alpha. May regulate extra and intracellular mitogenic signals. This Mus musculus (Mouse) protein is Regulator of G-protein signaling 16 (Rgs16).